Consider the following 522-residue polypeptide: Neuropeptide FF receptor 2 (522 aa).

The Extracellular portion of the chain corresponds to 1–147; it reads MNSFFGTPAA…NYYLHQPQVA (147 aa). The segment at 25 to 49 is disordered; the sequence is KEAGRERRALSVQQRGGPAWSGSLE. N-linked (GlcNAc...) asparagine glycosylation is found at asparagine 110, asparagine 122, and asparagine 133. Residues 148 to 168 form a helical membrane-spanning segment; sequence AIFIISYFLIFFLCMMGNTVV. Over 169 to 184 the chain is Cytoplasmic; the sequence is CFIVMRNKHMHTVTNL. A helical transmembrane segment spans residues 185-205; the sequence is FILNLAISDLLVGIFCMPITL. Residues 206–221 are Extracellular-facing; it reads LDNIIAGWPFGNTMCK. Cysteine 220 and cysteine 308 are oxidised to a cystine. A helical membrane pass occupies residues 222-242; that stretch reads ISGLVQGISVAASVFTLVAIA. The Cytoplasmic segment spans residues 243–262; that stretch reads VDRFQCVVYPFKPKLTIKTA. A helical membrane pass occupies residues 263–283; that stretch reads FVIIMIIWVLAITIMSPSAVM. The Extracellular portion of the chain corresponds to 284-319; sequence LHVQEEKYYRVRLNSQNKTSPVYWCREDWPNQEMRK. N-linked (GlcNAc...) asparagine glycosylation occurs at asparagine 300. The chain crosses the membrane as a helical span at residues 320–340; the sequence is IYTTVLFANIYLAPLSLIVIM. The Cytoplasmic portion of the chain corresponds to 341–377; it reads YGRIGISLFRAAVPHTGRKNQEQWHVVSRKKQKIIKM. Residues 378 to 398 form a helical membrane-spanning segment; sequence LLIVALLFILSWLPLWTLMML. Residues 399 to 413 lie on the Extracellular side of the membrane; the sequence is SDYADLSPNELQIIN. A helical membrane pass occupies residues 414–434; the sequence is IYIYPFAHWLAFGNSSVNPII. Residues 435 to 522 lie on the Cytoplasmic side of the membrane; the sequence is YGFFNENFRR…LKETTNSSEI (88 aa).

This sequence belongs to the G-protein coupled receptor 1 family. In terms of tissue distribution, isoform 1 is abundant in placenta. Relatively highly expressed in thymus, testis, and small intestine. Expressed at low levels in several tissues including spleen, prostate, brain, heart, ovary, colon, kidney, lung, liver and pancreas and not expressed in skeletal muscle and leukocytes. Isoform 2 expression is highest in placenta (but at relatively low level compared to isoform 1). Very low level of expression in numerous tissues including adipose tissue and many brain regions. Isoform 3 is expressed in brain and heart and, at lower levels, in kidney, liver, lung and pancreas.

The protein resides in the cell membrane. Receptor for NPAF (A-18-F-amide) and NPFF (F-8-F-amide) neuropeptides, also known as morphine-modulating peptides. Can also be activated by a variety of naturally occurring or synthetic FMRF-amide like ligands. This receptor mediates its action by association with G proteins that activate a phosphatidylinositol-calcium second messenger system. This chain is Neuropeptide FF receptor 2, found in Homo sapiens (Human).